Consider the following 417-residue polypeptide: Gamma-glutamyl phosphate reductase (417 aa).

It belongs to the gamma-glutamyl phosphate reductase family.

It localises to the cytoplasm. The enzyme catalyses L-glutamate 5-semialdehyde + phosphate + NADP(+) = L-glutamyl 5-phosphate + NADPH + H(+). It functions in the pathway amino-acid biosynthesis; L-proline biosynthesis; L-glutamate 5-semialdehyde from L-glutamate: step 2/2. In terms of biological role, catalyzes the NADPH-dependent reduction of L-glutamate 5-phosphate into L-glutamate 5-semialdehyde and phosphate. The product spontaneously undergoes cyclization to form 1-pyrroline-5-carboxylate. This is Gamma-glutamyl phosphate reductase from Klebsiella pneumoniae (strain 342).